We begin with the raw amino-acid sequence, 133 residues long: Egg protein CP422 (133 aa).

Positions 1–21 are cleaved as a signal peptide; sequence MHECMIVFFIFAVVSIYYADA. 3 disulfides stabilise this stretch: Cys107/Cys121, Cys114/Cys125, and Cys120/Cys130.

The protein localises to the secreted. This is Egg protein CP422 (CP422) from Schistosoma japonicum (Blood fluke).